The sequence spans 372 residues: GDP-mannose 4,6-dehydratase (372 aa).

NADP(+)-binding positions include 9–14 (GVTGQD), 64–65 (DL), 86–90 (LGAQS), and Y101. T133 is a catalytic residue. Residues E135 and Y157 each act as nucleophile in the active site. NADP(+)-binding residues include K161, H187, and R192.

Belongs to the NAD(P)-dependent epimerase/dehydratase family. GDP-mannose 4,6-dehydratase subfamily. NADP(+) serves as cofactor.

It carries out the reaction GDP-alpha-D-mannose = GDP-4-dehydro-alpha-D-rhamnose + H2O. It functions in the pathway nucleotide-sugar biosynthesis; GDP-L-fucose biosynthesis via de novo pathway; GDP-L-fucose from GDP-alpha-D-mannose: step 1/2. Its function is as follows. Catalyzes the conversion of GDP-D-mannose to GDP-4-dehydro-6-deoxy-D-mannose. This is GDP-mannose 4,6-dehydratase from Vibrio cholerae.